The following is a 47-amino-acid chain: Large ribosomal subunit protein bL34 (47 aa).

It belongs to the bacterial ribosomal protein bL34 family.

In Mycobacterium ulcerans (strain Agy99), this protein is Large ribosomal subunit protein bL34.